The chain runs to 33 residues: Gastrin (33 aa).

The disordered stretch occupies residues Glu-1–Trp-21. Gln-18 bears the Pyrrolidone carboxylic acid mark. Tyr-28 carries the sulfotyrosine modification. The residue at position 33 (Phe-33) is a Phenylalanine amide.

This sequence belongs to the gastrin/cholecystokinin family.

It localises to the secreted. In terms of biological role, gastrin stimulates the stomach mucosa to produce and secrete hydrochloric acid and the pancreas to secrete its digestive enzymes. It also stimulates smooth muscle contraction and increases blood circulation and water secretion in the stomach and intestine. The sequence is that of Gastrin (GAST) from Chinchilla chinchilla (Short-tailed chinchilla).